An 860-amino-acid chain; its full sequence is Nuclear pore complex protein NUP93B (860 aa).

This sequence belongs to the nucleoporin interacting component (NIC) family. In terms of assembly, part of the nuclear pore complex (NPC). The NPC has an eight-fold symmetrical structure comprising a central transport channel and two rings, the cytoplasmic and nuclear rings, to which eight filaments are attached. The cytoplasmic filaments have loose ends, while the nuclear filaments are joined in a distal ring, forming a nuclear basket. NPCs are highly dynamic in configuration and composition, and can be devided in 3 subcomplexes, the NUP62 subcomplex, the NUP107-160 subcomplex and the NUP93 subcomplex, containing approximately 30 different nucleoporin proteins.

The protein resides in the nucleus envelope. It localises to the nucleus. The protein localises to the nuclear pore complex. This is Nuclear pore complex protein NUP93B from Arabidopsis thaliana (Mouse-ear cress).